We begin with the raw amino-acid sequence, 561 residues long: Arginine--tRNA ligase (561 aa).

The 'HIGH' region motif lies at 129-139 (ANPTGPLHVGH).

The protein belongs to the class-I aminoacyl-tRNA synthetase family. As to quaternary structure, monomer.

The protein localises to the cytoplasm. The catalysed reaction is tRNA(Arg) + L-arginine + ATP = L-arginyl-tRNA(Arg) + AMP + diphosphate. The chain is Arginine--tRNA ligase from Bordetella petrii (strain ATCC BAA-461 / DSM 12804 / CCUG 43448).